Consider the following 207-residue polypeptide: Small ribosomal subunit protein uS4c (207 aa).

In terms of domain architecture, S4 RNA-binding spans 92–156; that stretch reads MRLDNILFRL…YQSIITKRIE (65 aa).

This sequence belongs to the universal ribosomal protein uS4 family. Part of the 30S ribosomal subunit. Contacts protein S5. The interaction surface between S4 and S5 is involved in control of translational fidelity.

It localises to the plastid. The protein resides in the chloroplast. One of the primary rRNA binding proteins, it binds directly to 16S rRNA where it nucleates assembly of the body of the 30S subunit. Its function is as follows. With S5 and S12 plays an important role in translational accuracy. This chain is Small ribosomal subunit protein uS4c (rps4), found in Equisetum sylvaticum (Wood horsetail).